We begin with the raw amino-acid sequence, 1269 residues long: Regulator of nonsense transcripts 2 (1269 aa).

2 disordered regions span residues 1–125 (MPAE…EKEE) and 143–162 (LRSK…FFSR). Residues 57–133 (KKRLEEDKRK…EESLQLHQEA (77 aa)) are a coiled coil. The tract at residues 94 to 132 (KKKQEEEERKKQEEQAKRQQEEAAAQLKEKEESLQLHQE) is sufficient for interaction with UPF1. The MIF4G 1 domain occupies 168–396 (KKNTAFVKKL…KGELSEDRHK (229 aa)). 2 disordered regions span residues 422–444 (NMPD…DIFT) and 487–518 (KSQN…DLEL). Composition is skewed to basic and acidic residues over residues 427–438 (PQDKPTPEEHGP) and 487–511 (KSQN…KEAS). 2 consecutive MIF4G domains span residues 571–755 (QQLP…YCNP) and 774–984 (RKLL…LRPK). The tract at residues 709–926 (GRFLFRSPES…IRLVCTILDT (218 aa)) is sufficient for interaction with UPF3A and UPF3B. The segment at 755 to 1269 (PPPAEKTVRK…LIFKTGGRRR (515 aa)) is sufficient for interaction with EIF4A1 and EIF1. Residues 837–857 (EDVGIHVVDGVLEDIRLGMEV) are binds to UPF3B. A disordered region spans residues 1017-1090 (SKDSMTEGEN…KENETDEENA (74 aa)). Acidic residues predominate over residues 1025–1073 (ENLEEDEEEEEGGAETEEQSGNESEVNEPEEEEGSEEEEEGEEEEEENT). The sufficient for interaction with UPF1 C-terminus stretch occupies residues 1081 to 1269 (KENETDEENA…LIFKTGGRRR (189 aa)). The residue at position 1085 (T1085) is a Phosphothreonine. Interaction with UPF1 regions lie at residues 1102–1126 (VPCV…QQRS) and 1164–1204 (DTMP…AEQE). Positions 1102-1195 (VPCVEDEDFI…PMSSQLAANH (94 aa)) are necessary for interaction with UPF1. Residues 1218-1269 (ERQEQEDYQEMLQSLAQRPAPANTNRERRPRYQHPKGAPNADLIFKTGGRRR) are disordered.

Found in a post-splicing messenger ribonucleoprotein (mRNP) complex. Associates with the exon junction complex (EJC). Interacts with SMG1, EST1A, UPF3A, UPF3B, EIF4A1 and EIF1. Interacts with UPF1; interaction is promoted by TDRD6. Interacts with DDX4. As to expression, localized in male germ cells.

Its subcellular location is the cytoplasm. The protein localises to the perinuclear region. Involved in nonsense-mediated decay (NMD) of mRNAs containing premature stop codons by associating with the nuclear exon junction complex (EJC). Recruited by UPF3B associated with the EJC core at the cytoplasmic side of the nuclear envelope and the subsequent formation of an UPF1-UPF2-UPF3 surveillance complex (including UPF1 bound to release factors at the stalled ribosome) is believed to activate NMD. In cooperation with UPF3B stimulates both ATPase and RNA helicase activities of UPF1. Binds spliced mRNA. This chain is Regulator of nonsense transcripts 2, found in Mus musculus (Mouse).